A 320-amino-acid chain; its full sequence is Pyrroline-5-carboxylate reductase 2 (320 aa).

An N-acetylserine modification is found at Ser-2. NADP(+)-binding positions include 6–11 (IGAGQL) and Ser-34. NADPH contacts are provided by Ala-8, Gln-10, Leu-11, Ser-34, Glu-36, Asn-56, Val-70, Lys-71, and Ala-97. NADP(+) is bound by residues Asn-56, 69–72 (AVKP), and 95–97 (CAA). Residue Glu-164 coordinates L-proline. Asn-230 serves as a coordination point for NADPH. Residues Ala-237 and Thr-238 each coordinate L-proline. The disordered stretch occupies residues 293–320 (ESPTVSTLAPPSSGKLLTRNPAQGSKRE). Ser-304 is subject to Phosphoserine.

It belongs to the pyrroline-5-carboxylate reductase family. In terms of assembly, homodecamer; composed of 5 homodimers. Interacts with LTO1.

It localises to the cytoplasm. It is found in the mitochondrion. The catalysed reaction is L-proline + NADP(+) = (S)-1-pyrroline-5-carboxylate + NADPH + 2 H(+). It carries out the reaction L-proline + NAD(+) = (S)-1-pyrroline-5-carboxylate + NADH + 2 H(+). Its pathway is amino-acid biosynthesis; L-proline biosynthesis; L-proline from L-glutamate 5-semialdehyde: step 1/1. In terms of biological role, oxidoreductase that catalyzes the last step in proline biosynthesis, which corresponds to the reduction of pyrroline-5-carboxylate to L-proline using NAD(P)H. At physiologic concentrations, has higher specific activity in the presence of NADH. Involved in cellular response to oxidative stress. In some cell types, such as erythrocytes, its primary function may be the generation of NADP(+). This is Pyrroline-5-carboxylate reductase 2 from Rattus norvegicus (Rat).